Consider the following 104-residue polypeptide: Small ribosomal subunit protein bS18c (104 aa).

The segment at 84–104 is disordered; it reads DKQFERSESTPRTIGLRTRNK.

The protein belongs to the bacterial ribosomal protein bS18 family. Part of the 30S ribosomal subunit.

The protein localises to the plastid. It localises to the chloroplast. In Cucumis sativus (Cucumber), this protein is Small ribosomal subunit protein bS18c.